The following is a 182-amino-acid chain: NADH-quinone oxidoreductase subunit I (182 aa).

2 consecutive 4Fe-4S ferredoxin-type domains span residues 52-82 (LTRD…LQKA) and 92-121 (DFFR…LTPD). Positions 62, 65, 68, 72, 101, 104, 107, and 111 each coordinate [4Fe-4S] cluster.

The protein belongs to the complex I 23 kDa subunit family. As to quaternary structure, NDH-1 is composed of 13 different subunits. Subunits NuoA, H, J, K, L, M, N constitute the membrane sector of the complex. [4Fe-4S] cluster is required as a cofactor.

It is found in the cell inner membrane. It catalyses the reaction a quinone + NADH + 5 H(+)(in) = a quinol + NAD(+) + 4 H(+)(out). NDH-1 shuttles electrons from NADH, via FMN and iron-sulfur (Fe-S) centers, to quinones in the respiratory chain. The immediate electron acceptor for the enzyme in this species is believed to be ubiquinone. Couples the redox reaction to proton translocation (for every two electrons transferred, four hydrogen ions are translocated across the cytoplasmic membrane), and thus conserves the redox energy in a proton gradient. This Pseudomonas syringae pv. syringae (strain B728a) protein is NADH-quinone oxidoreductase subunit I.